Consider the following 383-residue polypeptide: ATP phosphoribosyltransferase regulatory subunit (383 aa).

It belongs to the class-II aminoacyl-tRNA synthetase family. HisZ subfamily. As to quaternary structure, heteromultimer composed of HisG and HisZ subunits.

The protein localises to the cytoplasm. Its pathway is amino-acid biosynthesis; L-histidine biosynthesis; L-histidine from 5-phospho-alpha-D-ribose 1-diphosphate: step 1/9. Required for the first step of histidine biosynthesis. May allow the feedback regulation of ATP phosphoribosyltransferase activity by histidine. The polypeptide is ATP phosphoribosyltransferase regulatory subunit (Chromobacterium violaceum (strain ATCC 12472 / DSM 30191 / JCM 1249 / CCUG 213 / NBRC 12614 / NCIMB 9131 / NCTC 9757 / MK)).